We begin with the raw amino-acid sequence, 869 residues long: DNA mismatch repair protein MutS (869 aa).

624 to 631 (GPNMGGKS) contributes to the ATP binding site.

It belongs to the DNA mismatch repair MutS family.

Its function is as follows. This protein is involved in the repair of mismatches in DNA. It is possible that it carries out the mismatch recognition step. This protein has a weak ATPase activity. The protein is DNA mismatch repair protein MutS of Solibacter usitatus (strain Ellin6076).